The following is a 136-amino-acid chain: Probable 5-hydroxyisourate hydrolase ZK697.8 (136 aa).

Residues 1 to 19 form the signal peptide; that stretch reads MIKFLLFLAIAAATVISNA. The substrate site is built by His31, Arg69, and Tyr133.

The protein belongs to the transthyretin family. 5-hydroxyisourate hydrolase subfamily. In terms of assembly, homotetramer.

It carries out the reaction 5-hydroxyisourate + H2O = 5-hydroxy-2-oxo-4-ureido-2,5-dihydro-1H-imidazole-5-carboxylate + H(+). Catalyzes the hydrolysis of 5-hydroxyisourate (HIU) to 2-oxo-4-hydroxy-4-carboxy-5-ureidoimidazoline (OHCU). The polypeptide is Probable 5-hydroxyisourate hydrolase ZK697.8 (Caenorhabditis elegans).